The following is a 263-amino-acid chain: Cytochrome c oxidase subunit 3 (263 aa).

The next 7 helical transmembrane spans lie at 9 to 29 (PFHM…AMIL), 40 to 60 (FNMN…IQWW), 84 to 104 (GMIL…WAFF), 129 to 149 (IQIP…ITWA), 161 to 181 (ALQG…LQMY), 198 to 218 (TFFV…TFLL), and 241 to 261 (AWYW…IYWW).

Belongs to the cytochrome c oxidase subunit 3 family. As to quaternary structure, component of the cytochrome c oxidase (complex IV, CIV), a multisubunit enzyme composed of a catalytic core of 3 subunits and several supernumerary subunits. The complex exists as a monomer or a dimer and forms supercomplexes (SCs) in the inner mitochondrial membrane with ubiquinol-cytochrome c oxidoreductase (cytochrome b-c1 complex, complex III, CIII).

It is found in the mitochondrion inner membrane. The enzyme catalyses 4 Fe(II)-[cytochrome c] + O2 + 8 H(+)(in) = 4 Fe(III)-[cytochrome c] + 2 H2O + 4 H(+)(out). Its function is as follows. Component of the cytochrome c oxidase, the last enzyme in the mitochondrial electron transport chain which drives oxidative phosphorylation. The respiratory chain contains 3 multisubunit complexes succinate dehydrogenase (complex II, CII), ubiquinol-cytochrome c oxidoreductase (cytochrome b-c1 complex, complex III, CIII) and cytochrome c oxidase (complex IV, CIV), that cooperate to transfer electrons derived from NADH and succinate to molecular oxygen, creating an electrochemical gradient over the inner membrane that drives transmembrane transport and the ATP synthase. Cytochrome c oxidase is the component of the respiratory chain that catalyzes the reduction of oxygen to water. Electrons originating from reduced cytochrome c in the intermembrane space (IMS) are transferred via the dinuclear copper A center (CU(A)) of subunit 2 and heme A of subunit 1 to the active site in subunit 1, a binuclear center (BNC) formed by heme A3 and copper B (CU(B)). The BNC reduces molecular oxygen to 2 water molecules using 4 electrons from cytochrome c in the IMS and 4 protons from the mitochondrial matrix. The sequence is that of Cytochrome c oxidase subunit 3 (COIII) from Locusta migratoria (Migratory locust).